Reading from the N-terminus, the 420-residue chain is MIOREX complex component 9 (420 aa).

Transmembrane regions (helical) follow at residues Val125–Leu145 and Ile149–Phe169.

As to quaternary structure, associates with the mitochondrial ribosome.

The protein resides in the mitochondrion. It is found in the mitochondrion membrane. In terms of biological role, component of MIOREX complexes, large expressome-like assemblies of ribosomes with factors involved in all the steps of post-transcriptional gene expression. This is MIOREX complex component 9 from Saccharomyces cerevisiae (strain ATCC 204508 / S288c) (Baker's yeast).